A 428-amino-acid polypeptide reads, in one-letter code: Glycine reductase complex component B subunits alpha and beta (428 aa).

The active-site Schiff-base intermediate with substrate; via pyruvic acid is the Cys-242. Residue Cys-242 is modified to Pyruvic acid (Cys).

In terms of assembly, heterohexamer of two alpha, two beta and two gamma subunits. Component of the glycine reductase complex, together with components A and C. PB is substrate specific. The peptide chain is cleaved into beta and alpha chains, and the alpha chain N-terminal cysteine is deaminated and oxidized to form a reactive pyruvoyl group.

The catalysed reaction is acetyl phosphate + [thioredoxin]-disulfide + NH4(+) + H2O = [thioredoxin]-dithiol + glycine + phosphate + H(+). In terms of biological role, in the first step of glycine reductase, the substrate is bound to component PB via a Schiff base intermediate. Then the PB-activated substrate is nucleophilically attacked by the selenol anion of component PA to transform it to a carboxymethylated selenoether and the respective amine. By action of component PC, acetyl phosphate is formed, leaving component PA in its oxidized state. Finally component PA becomes reduced by the thioredoxin system to start a new catalytic cycle of reductive deamination. This is Glycine reductase complex component B subunits alpha and beta (grdE) from Peptoclostridium acidaminophilum (Eubacterium acidaminophilum).